Here is a 413-residue protein sequence, read N- to C-terminus: tRNA (guanine-N(7)-)-methyltransferase non-catalytic subunit WDR4 (413 aa).

Alanine 2 is modified (N-acetylalanine). WD repeat units follow at residues 61–100 (TGSD…CLSV), 102–141 (MVVR…GCGR), 145–185 (GHLS…IESF), 188–228 (GHTE…QLQC), and 289–329 (TFPH…WQAA). The interval 380-413 (RLQQQLKKKRQRSPFPGSPEQTKKACPGQSALSC) is disordered. Residues serine 392 and serine 412 each carry the phosphoserine modification.

This sequence belongs to the WD repeat TRM82 family. Non-catalytic component of the METTL1-WDR4 complex, composed of METTL1 and WDR4. Interacts with FEN1; the interaction is direct.

It is found in the nucleus. The protein resides in the chromosome. Its pathway is tRNA modification; N(7)-methylguanine-tRNA biosynthesis. Functionally, non-catalytic component of the METTL1-WDR4 methyltransferase complex required for the formation of N(7)-methylguanine in a subset of RNA species, such as tRNAs, mRNAs and microRNAs (miRNAs). In the METTL1-WDR4 methyltransferase complex, WDR4 acts as a scaffold for tRNA-binding. Required for the formation of N(7)-methylguanine at position 46 (m7G46) in a large subset of tRNAs that contain the 5'-RAGGU-3' motif within the variable loop. M7G46 interacts with C13-G22 in the D-loop to stabilize tRNA tertiary structure and protect tRNAs from decay. Also required for the formation of N(7)-methylguanine at internal sites in a subset of mRNAs. Also required for methylation of a specific subset of miRNAs, such as let-7. Acts as a regulator of embryonic stem cell self-renewal and differentiation. Independently of METTL1, also plays a role in genome stability: localizes at the DNA replication site and regulates endonucleolytic activities of FEN1. This is tRNA (guanine-N(7)-)-methyltransferase non-catalytic subunit WDR4 from Mus musculus (Mouse).